Here is a 219-residue protein sequence, read N- to C-terminus: 7-cyano-7-deazaguanine synthase (219 aa).

10-20 provides a ligand contact to ATP; the sequence is FSGGQDSTTCL. 4 residues coordinate Zn(2+): cysteine 188, cysteine 197, cysteine 200, and cysteine 203.

The protein belongs to the QueC family. Homodimer. Zn(2+) serves as cofactor.

It catalyses the reaction 7-carboxy-7-deazaguanine + NH4(+) + ATP = 7-cyano-7-deazaguanine + ADP + phosphate + H2O + H(+). The protein operates within purine metabolism; 7-cyano-7-deazaguanine biosynthesis. Catalyzes the ATP-dependent conversion of 7-carboxy-7-deazaguanine (CDG) to 7-cyano-7-deazaguanine (preQ(0)). The protein is 7-cyano-7-deazaguanine synthase of Clostridium botulinum (strain ATCC 19397 / Type A).